The following is a 398-amino-acid chain: S-adenosylmethionine synthase 2 (398 aa).

His16 contacts ATP. Mg(2+) is bound at residue Asp18. Residue Glu51 participates in K(+) binding. Residues Glu64 and Gln108 each contribute to the L-methionine site. Residues 108–118 (QSADIAQGVDA) are flexible loop. ATP is bound by residues 176–178 (DSK), 242–243 (KF), Asp251, 257–258 (RK), Ala274, and Lys278. Position 251 (Asp251) interacts with L-methionine. Lys282 provides a ligand contact to L-methionine.

This sequence belongs to the AdoMet synthase family. As to quaternary structure, homotetramer; dimer of dimers. Mg(2+) serves as cofactor. Requires K(+) as cofactor.

It is found in the cytoplasm. The enzyme catalyses L-methionine + ATP + H2O = S-adenosyl-L-methionine + phosphate + diphosphate. It participates in amino-acid biosynthesis; S-adenosyl-L-methionine biosynthesis; S-adenosyl-L-methionine from L-methionine: step 1/1. In terms of biological role, catalyzes the formation of S-adenosylmethionine (AdoMet) from methionine and ATP. The overall synthetic reaction is composed of two sequential steps, AdoMet formation and the subsequent tripolyphosphate hydrolysis which occurs prior to release of AdoMet from the enzyme. The chain is S-adenosylmethionine synthase 2 from Rhodopseudomonas palustris (strain BisB18).